We begin with the raw amino-acid sequence, 336 residues long: dTDP-glucose 4,6-dehydratase (336 aa).

NAD(+) is bound by residues 7–13, 37–40, and 63–64; these read GGAGFIG, DKLT, and DI. Threonine 87 provides a ligand contact to substrate. Threonine 102 is an NAD(+) binding site. Substrate is bound at residue 127–129; that stretch reads TDE. The active-site Proton donor is the aspartate 128. Residues glutamate 129 and tyrosine 151 each act as proton acceptor in the active site. An NAD(+)-binding site is contributed by 151 to 155; the sequence is YAAAK. Substrate is bound at residue asparagine 180. Asparagine 181 provides a ligand contact to NAD(+). Substrate-binding positions include 190-191, 206-208, arginine 215, asparagine 250, and 274-277; these read KL, PVY, and RPGH.

This sequence belongs to the NAD(P)-dependent epimerase/dehydratase family. dTDP-glucose dehydratase subfamily. As to quaternary structure, homodimer. It depends on NAD(+) as a cofactor.

The enzyme catalyses dTDP-alpha-D-glucose = dTDP-4-dehydro-6-deoxy-alpha-D-glucose + H2O. The protein operates within antibiotic biosynthesis; novobiocin biosynthesis. Functionally, dTDP-glucose 4,6-dehydratase involved in the generation of the deoxysugar in the novobiocin biosynthesis pathway, an aminocoumarin family antibiotic that targets bacterial DNA gyrases. The polypeptide is dTDP-glucose 4,6-dehydratase (novT) (Streptomyces niveus (Streptomyces spheroides)).